A 133-amino-acid chain; its full sequence is Transcription antitermination protein NusB (133 aa).

Belongs to the NusB family.

Involved in transcription antitermination. Required for transcription of ribosomal RNA (rRNA) genes. Binds specifically to the boxA antiterminator sequence of the ribosomal RNA (rrn) operons. This is Transcription antitermination protein NusB from Shewanella denitrificans (strain OS217 / ATCC BAA-1090 / DSM 15013).